Reading from the N-terminus, the 268-residue chain is Tryptophan synthase alpha chain (268 aa).

Residues Glu-49 and Asp-60 each act as proton acceptor in the active site.

Belongs to the TrpA family. Tetramer of two alpha and two beta chains.

It carries out the reaction (1S,2R)-1-C-(indol-3-yl)glycerol 3-phosphate + L-serine = D-glyceraldehyde 3-phosphate + L-tryptophan + H2O. It functions in the pathway amino-acid biosynthesis; L-tryptophan biosynthesis; L-tryptophan from chorismate: step 5/5. Functionally, the alpha subunit is responsible for the aldol cleavage of indoleglycerol phosphate to indole and glyceraldehyde 3-phosphate. The polypeptide is Tryptophan synthase alpha chain (Escherichia coli (strain SE11)).